Here is a 41-residue protein sequence, read N- to C-terminus: MMKRLIVLVLLASTLLTGCNTARGFGEDIKHLGNSISRAAS.

Residues 1–18 (MMKRLIVLVLLASTLLTG) form the signal peptide. A lipid anchor (N-palmitoyl cysteine) is attached at C19. C19 carries S-diacylglycerol cysteine lipidation.

The protein belongs to the EcnA/EcnB lipoprotein family.

The protein localises to the cell membrane. Acts as antidote to the effect of entericidin B. This chain is Entericidin A (ecnA), found in Escherichia coli O157:H7.